Reading from the N-terminus, the 223-residue chain is Large ribosomal subunit protein bL25 (223 aa).

The protein belongs to the bacterial ribosomal protein bL25 family. CTC subfamily. Part of the 50S ribosomal subunit; part of the 5S rRNA/L5/L18/L25 subcomplex. Contacts the 5S rRNA. Binds to the 5S rRNA independently of L5 and L18.

This is one of the proteins that binds to the 5S RNA in the ribosome where it forms part of the central protuberance. This is Large ribosomal subunit protein bL25 from Albidiferax ferrireducens (strain ATCC BAA-621 / DSM 15236 / T118) (Rhodoferax ferrireducens).